A 252-amino-acid polypeptide reads, in one-letter code: Indole-3-glycerol phosphate synthase (252 aa).

The protein belongs to the TrpC family.

It catalyses the reaction 1-(2-carboxyphenylamino)-1-deoxy-D-ribulose 5-phosphate + H(+) = (1S,2R)-1-C-(indol-3-yl)glycerol 3-phosphate + CO2 + H2O. Its pathway is amino-acid biosynthesis; L-tryptophan biosynthesis; L-tryptophan from chorismate: step 4/5. The sequence is that of Indole-3-glycerol phosphate synthase from Listeria monocytogenes serovar 1/2a (strain ATCC BAA-679 / EGD-e).